A 363-amino-acid polypeptide reads, in one-letter code: MASSASKTNIGVFTNPQHDLWISEASPSLESVQKGEELKEGEVTVAVRSTGICGSDVHFWKHGCIGPMIVECDHVLGHESAGEVIAVHPSVKSIKVGDRVAIEPQVICNACEPCLTGRYNGCERVDFLSTPPVPGLLRRYVNHPAVWCHKIGNMSYENGAMLEPLSVALAGLQRAGVRLGDPVLICGAGPIGLITMLCAKAAGACPLVITDIDEGRLKFAKEICPEVVTHKVERLSAEESAKKIVESFGGIEPAVALECTGVESSIAAAIWAVKFGGKVFVIGVGKNEIQIPFMRASVREVDLQFQYRYCNTWPRAIRLVENGLVDLTRLVTHRFPLEDALKAFETASDPKTGAIKVQIQSLE.

Residues cysteine 53, histidine 78, glutamate 79, cysteine 108, cysteine 111, cysteine 114, cysteine 122, and glutamate 163 each contribute to the Zn(2+) site. Residues 190–191 (PI), aspartate 211, arginine 216, isoleucine 282, and 306–308 (QYR) each bind NAD(+).

This sequence belongs to the zinc-containing alcohol dehydrogenase family. In terms of assembly, homotetramer. It depends on Zn(2+) as a cofactor.

The enzyme catalyses L-arabinitol + NAD(+) = L-xylulose + NADH + H(+). It functions in the pathway carbohydrate degradation; L-arabinose degradation via L-arabinitol; D-xylulose 5-phosphate from L-arabinose (fungal route): step 2/5. Functionally, catalyzes the NAD-dependent oxidation of L-arabinitol to L-xylulose in the fungal L-arabinose catabolic pathway. L-arabinose catabolism is important for using plant material as a carbon source. Not active on D-arabinitol, D-sorbitol and D-mannitol. The protein is L-arabinitol 4-dehydrogenase (ard-1) of Neurospora crassa (strain ATCC 24698 / 74-OR23-1A / CBS 708.71 / DSM 1257 / FGSC 987).